The primary structure comprises 447 residues: Tubulin beta-1 chain (447 aa).

Gln11, Glu69, Ser138, Gly142, Thr143, Gly144, Asn204, and Asn226 together coordinate GTP. Glu69 serves as a coordination point for Mg(2+). The interval 427–447 (EATADEDAEFEEEQEAEVEEN) is disordered. Residues 429-447 (TADEDAEFEEEQEAEVEEN) are compositionally biased toward acidic residues.

This sequence belongs to the tubulin family. Dimer of alpha and beta chains. A typical microtubule is a hollow water-filled tube with an outer diameter of 25 nm and an inner diameter of 15 nM. Alpha-beta heterodimers associate head-to-tail to form protofilaments running lengthwise along the microtubule wall with the beta-tubulin subunit facing the microtubule plus end conferring a structural polarity. Microtubules usually have 13 protofilaments but different protofilament numbers can be found in some organisms and specialized cells. Mg(2+) serves as cofactor.

It is found in the cytoplasm. It localises to the cytoskeleton. In terms of biological role, tubulin is the major constituent of microtubules, a cylinder consisting of laterally associated linear protofilaments composed of alpha- and beta-tubulin heterodimers. Microtubules grow by the addition of GTP-tubulin dimers to the microtubule end, where a stabilizing cap forms. Below the cap, tubulin dimers are in GDP-bound state, owing to GTPase activity of alpha-tubulin. This Glossina morsitans morsitans (Savannah tsetse fly) protein is Tubulin beta-1 chain.